A 561-amino-acid polypeptide reads, in one-letter code: Asparagine synthetase [glutamine-hydrolyzing] (561 aa).

Cys-2 serves as the catalytic For GATase activity. The Glutamine amidotransferase type-2 domain maps to 2–191; that stretch reads CGIWALFGSD…PGHYEVLDLK (190 aa). L-glutamine is bound by residues 49-53, 75-77, and Asp-97; these read RLAVV and NGE. The region spanning 213-536 is the Asparagine synthetase domain; sequence HALYDSVEKL…PGRADWLTHY (324 aa). Residues Leu-256, Ile-288, and 363–364 contribute to the ATP site; that span reads SG. Position 385 is an N6-acetyllysine (Lys-385). The residue at position 545 (Thr-545) is a Phosphothreonine. Ser-557 is modified (phosphoserine).

The enzyme catalyses L-aspartate + L-glutamine + ATP + H2O = L-asparagine + L-glutamate + AMP + diphosphate + H(+). It functions in the pathway amino-acid biosynthesis; L-asparagine biosynthesis; L-asparagine from L-aspartate (L-Gln route): step 1/1. In Cricetulus griseus (Chinese hamster), this protein is Asparagine synthetase [glutamine-hydrolyzing] (ASNS).